The sequence spans 274 residues: Serine protease 28 (274 aa).

The N-terminal stretch at 1-26 is a signal peptide; the sequence is MFRLLLLALSCLESTVFMASVSISRS. The region spanning 31–274 is the Peptidase S1 domain; that stretch reads IVGGQRTPPG…SLAWIHQHIQ (244 aa). Residues cysteine 62 and cysteine 78 are joined by a disulfide bond. The active-site Charge relay system is histidine 77. Asparagine 106 carries N-linked (GlcNAc...) asparagine glycosylation. Aspartate 124 functions as the Charge relay system in the catalytic mechanism. Cystine bridges form between cysteine 158–cysteine 233, cysteine 191–cysteine 214, and cysteine 223–cysteine 251. Serine 227 acts as the Charge relay system in catalysis.

This sequence belongs to the peptidase S1 family. Homooligomer, heterodimer and heterotetramer. Able to form homo- and hetero- tetrameric structures. Heterotetramer is far more stable than the homotetramer. In terms of tissue distribution, expressed in embryos throughout the preimplantation period, during blastocyst hatching and embryo outgrowth. Found in uterus especially in glandular epithelium.

It localises to the secreted. Inhibited by benzamidine, (4-amidino-phenyl)-methane-sulfonyl (APMSF), N-p-tosyl-L-lysine chloromethylketone (TLCK), gabexate, mesylate, BABIM and trypsin soybean inhibitor (TSI). Its function is as follows. Involved in embryo hatching and implantation. This chain is Serine protease 28 (Prss28), found in Mus musculus (Mouse).